The sequence spans 174 residues: Gamma-crystallin D (174 aa).

Beta/gamma crystallin 'Greek key' domains follow at residues 2–40 (GKITFYEDRGFQGRCYECSSDHVNLQSYFSRCNSIRVDS) and 41–83 (GCWM…RIIP). The tract at residues 84–87 (YSGS) is connecting peptide. Beta/gamma crystallin 'Greek key' domains are found at residues 88–128 (HKMR…NVLD) and 129–171 (GCWI…RRVI).

Belongs to the beta/gamma-crystallin family. As to quaternary structure, monomer.

Functionally, crystallins are the dominant structural components of the vertebrate eye lens. This is Gamma-crystallin D (CRYGD) from Macropus fuliginosus (Western gray kangaroo).